A 488-amino-acid chain; its full sequence is Galactose-1-phosphate uridylyltransferase (488 aa).

Belongs to the galactose-1-phosphate uridylyltransferase type 2 family.

It localises to the cytoplasm. It carries out the reaction alpha-D-galactose 1-phosphate + UDP-alpha-D-glucose = alpha-D-glucose 1-phosphate + UDP-alpha-D-galactose. It participates in carbohydrate metabolism; galactose metabolism. This is Galactose-1-phosphate uridylyltransferase (galT) from Lactobacillus helveticus (Lactobacillus suntoryeus).